Here is a 148-residue protein sequence, read N- to C-terminus: 3-dehydroquinate dehydratase (148 aa).

The active-site Proton acceptor is Tyr-23. Substrate is bound by residues Asn-75, His-81, and Asp-88. His-101 functions as the Proton donor in the catalytic mechanism. Substrate is bound by residues 102-103 (IS) and Arg-112.

This sequence belongs to the type-II 3-dehydroquinase family. As to quaternary structure, homododecamer.

It carries out the reaction 3-dehydroquinate = 3-dehydroshikimate + H2O. The protein operates within metabolic intermediate biosynthesis; chorismate biosynthesis; chorismate from D-erythrose 4-phosphate and phosphoenolpyruvate: step 3/7. In terms of biological role, catalyzes a trans-dehydration via an enolate intermediate. The chain is 3-dehydroquinate dehydratase from Methylococcus capsulatus (strain ATCC 33009 / NCIMB 11132 / Bath).